The sequence spans 513 residues: ATP synthase subunit alpha (513 aa).

Residue 169–176 (GDRQTGKT) coordinates ATP.

It belongs to the ATPase alpha/beta chains family. F-type ATPases have 2 components, CF(1) - the catalytic core - and CF(0) - the membrane proton channel. CF(1) has five subunits: alpha(3), beta(3), gamma(1), delta(1), epsilon(1). CF(0) has three main subunits: a(1), b(2) and c(9-12). The alpha and beta chains form an alternating ring which encloses part of the gamma chain. CF(1) is attached to CF(0) by a central stalk formed by the gamma and epsilon chains, while a peripheral stalk is formed by the delta and b chains.

The protein localises to the cell inner membrane. The enzyme catalyses ATP + H2O + 4 H(+)(in) = ADP + phosphate + 5 H(+)(out). Produces ATP from ADP in the presence of a proton gradient across the membrane. The alpha chain is a regulatory subunit. The chain is ATP synthase subunit alpha from Bordetella bronchiseptica (strain ATCC BAA-588 / NCTC 13252 / RB50) (Alcaligenes bronchisepticus).